The following is a 504-amino-acid chain: Ribonuclease Y (504 aa).

Residues 2 to 22 traverse the membrane as a helical segment; sequence TTSIVIGVVLVTVGLTFGWTI. Positions 194–279 constitute a KH domain; it reads TVSTVNLPSE…EIVQKVTQEV (86 aa). Residues 320 to 413 form the HD domain; the sequence is VLYHSKEVAL…VQVADAISAA (94 aa).

Belongs to the RNase Y family.

The protein resides in the cell membrane. Its function is as follows. Endoribonuclease that initiates mRNA decay. This is Ribonuclease Y from Treponema pallidum (strain Nichols).